A 263-amino-acid polypeptide reads, in one-letter code: 5'-nucleotidase SurE (263 aa).

Aspartate 8, aspartate 9, serine 40, and asparagine 93 together coordinate a divalent metal cation.

The protein belongs to the SurE nucleotidase family. The cofactor is a divalent metal cation.

It is found in the cytoplasm. The catalysed reaction is a ribonucleoside 5'-phosphate + H2O = a ribonucleoside + phosphate. Its function is as follows. Nucleotidase that shows phosphatase activity on nucleoside 5'-monophosphates. In Beijerinckia indica subsp. indica (strain ATCC 9039 / DSM 1715 / NCIMB 8712), this protein is 5'-nucleotidase SurE.